A 98-amino-acid chain; its full sequence is Citrate lyase acyl carrier protein (98 aa).

Ser14 is subject to O-(phosphoribosyl dephospho-coenzyme A)serine.

Belongs to the CitD family. In terms of assembly, oligomer with a subunit composition of (alpha,beta,gamma)6.

The protein resides in the cytoplasm. Covalent carrier of the coenzyme of citrate lyase. This chain is Citrate lyase acyl carrier protein, found in Shigella boydii serotype 4 (strain Sb227).